The chain runs to 342 residues: MKALVKEKAEPGLWLMDVPEPEIGPGDVLIKVLRTGICGTDLHIRSWDGWAQQAVRTPLVLGHEFVGEVVETGRDVVDIKAGDRVSGEGHLVCGKCRNCQAGRRHLCRATVGLGVGRDGAFAEYVALPAANVWVHRVPVDLDVAAIFDPFGNAVHTALSFPLVGEDVLITGAGPIGLMAAAVARHAGARNVMITDVSEERLELARKIGVSLALNVADTTIADGQRALGLREGFDIGLEMSGRPEAMRDMIANMTHGGRIAMLGLPSQEFPVDWARIVTSMITIKGIYGREMFETWYAMSVLLEGGLDLAPVITGRYGYRDYEAAFADAASGRGGKVILDWTL.

Position 38 (Cys-38) interacts with Zn(2+). Residues Thr-40 and His-43 each act as charge relay system in the active site. Residues His-63, Glu-64, Cys-93, Cys-96, Cys-99, and Cys-107 each coordinate Zn(2+). NAD(+) is bound by residues Ile-175, Asp-195, Arg-200, 262–264, and 286–287; these read LGL and IY.

Belongs to the zinc-containing alcohol dehydrogenase family. In terms of assembly, homotetramer. It depends on Zn(2+) as a cofactor.

It is found in the cytoplasm. The catalysed reaction is L-threonine + NAD(+) = (2S)-2-amino-3-oxobutanoate + NADH + H(+). It participates in amino-acid degradation; L-threonine degradation via oxydo-reductase pathway; glycine from L-threonine: step 1/2. Catalyzes the NAD(+)-dependent oxidation of L-threonine to 2-amino-3-ketobutyrate. This Streptomyces avermitilis (strain ATCC 31267 / DSM 46492 / JCM 5070 / NBRC 14893 / NCIMB 12804 / NRRL 8165 / MA-4680) protein is L-threonine 3-dehydrogenase.